The chain runs to 152 residues: Em-like protein GEA1 (152 aa).

Composition is skewed to basic and acidic residues over residues 1–17 (MASK…KAKQ) and 32–63 (EAQE…IGHK). Residues 1–63 (MASKQLSREE…HEGYQEIGHK (63 aa)) are disordered. 4 tandem repeats follow at residues 44-63 (GGQT…IGHK), 64-83 (GGEA…MGHK), 84-103 (GGEA…MGHK), and 104-123 (GGEA…MGRK). The interval 44-123 (GGQTRKEQLG…HEGYKEMGRK (80 aa)) is 4 X 20 AA tandem repeats. Residues 116-152 (GYKEMGRKGGLSTMEKSGGERAEEEGIEIDESKFTNK) are disordered.

It belongs to the small hydrophilic plant seed protein family. In terms of tissue distribution, in seeds only. Specifically located to vascular bundles in the cotyledon and axis of the dry seed. Also found in the epiderm and outer layers of the cortex in the embryo axis.

It is thought to provide protection for the cytoplasm during the desiccation stage of embryo development. In Arabidopsis thaliana (Mouse-ear cress), this protein is Em-like protein GEA1 (EM1).